Reading from the N-terminus, the 252-residue chain is Triosephosphate isomerase (252 aa).

9-11 is a binding site for substrate; the sequence is NWK. The active-site Electrophile is the His-96. The active-site Proton acceptor is the Glu-168. Residues Gly-174, Ser-214, and 235–236 contribute to the substrate site; that span reads GG.

The protein belongs to the triosephosphate isomerase family. In terms of assembly, homodimer.

The protein resides in the cytoplasm. The catalysed reaction is D-glyceraldehyde 3-phosphate = dihydroxyacetone phosphate. It participates in carbohydrate biosynthesis; gluconeogenesis. It functions in the pathway carbohydrate degradation; glycolysis; D-glyceraldehyde 3-phosphate from glycerone phosphate: step 1/1. In terms of biological role, involved in the gluconeogenesis. Catalyzes stereospecifically the conversion of dihydroxyacetone phosphate (DHAP) to D-glyceraldehyde-3-phosphate (G3P). The sequence is that of Triosephosphate isomerase from Chloroherpeton thalassium (strain ATCC 35110 / GB-78).